A 931-amino-acid polypeptide reads, in one-letter code: Phosphoenolpyruvate carboxylase (931 aa).

Active-site residues include histidine 138 and lysine 594.

The protein belongs to the PEPCase type 1 family. Mg(2+) serves as cofactor.

It catalyses the reaction oxaloacetate + phosphate = phosphoenolpyruvate + hydrogencarbonate. Forms oxaloacetate, a four-carbon dicarboxylic acid source for the tricarboxylic acid cycle. This chain is Phosphoenolpyruvate carboxylase, found in Streptococcus agalactiae serotype III (strain NEM316).